The primary structure comprises 123 residues: Small ribosomal subunit protein uS12 (123 aa).

D89 carries the 3-methylthioaspartic acid modification.

It belongs to the universal ribosomal protein uS12 family. Part of the 30S ribosomal subunit. Contacts proteins S8 and S17. May interact with IF1 in the 30S initiation complex.

In terms of biological role, with S4 and S5 plays an important role in translational accuracy. Interacts with and stabilizes bases of the 16S rRNA that are involved in tRNA selection in the A site and with the mRNA backbone. Located at the interface of the 30S and 50S subunits, it traverses the body of the 30S subunit contacting proteins on the other side and probably holding the rRNA structure together. The combined cluster of proteins S8, S12 and S17 appears to hold together the shoulder and platform of the 30S subunit. The sequence is that of Small ribosomal subunit protein uS12 from Geotalea uraniireducens (strain Rf4) (Geobacter uraniireducens).